The chain runs to 580 residues: YTH domain-containing family protein 2 (580 aa).

The tract at residues methionine 1–asparagine 45 is disordered. Serine 2 is modified (N-acetylserine). A phosphoserine mark is found at serine 2, serine 4, serine 5, serine 22, serine 39, and serine 196. Residues serine 2–glutamate 385 form a localization to mRNA processing bodies (P-bodies) region. Positions alanine 247 to proline 388 are disordered. Residues alanine 291–proline 317 show a composition bias toward polar residues. Residues alanine 338–threonine 350 show a composition bias toward low complexity. Serine 360 bears the Phosphoserine mark. Gly residues predominate over residues serine 360–valine 372. The segment covering glycine 373–serine 384 has biased composition (polar residues). An interaction with m6A-containing mRNAs region spans residues proline 386 to lysine 580. A Phosphoserine modification is found at serine 395. The YTH domain maps to glycine 411–isoleucine 545. Residues lysine 417 to tyrosine 419, aspartate 423, tryptophan 433 to cysteine 434, asparagine 463, tryptophan 487, and tryptophan 492 contribute to the RNA site.

It belongs to the YTHDF family. YTHDF2 subfamily. In terms of assembly, interacts with CNOT1; interaction is direct and promotes recruitment of the CCR4-NOT complex. Interacts with YTHDF3. Interacts with RIDA/HRSP12; interaction leads to recruitment of the ribonuclease P/MRP complex. In terms of processing, ubiquitinated by the SCF(SKP2) complex, leading to its degradation.

The protein localises to the cytoplasm. Its subcellular location is the cytosol. The protein resides in the P-body. It is found in the stress granule. It localises to the nucleus. Specifically recognizes and binds N6-methyladenosine (m6A)-containing RNAs, and regulates their stability. M6A is a modification present at internal sites of mRNAs and some non-coding RNAs and plays a role in mRNA stability and processing. Acts as a regulator of mRNA stability by promoting degradation of m6A-containing mRNAs via interaction with the CCR4-NOT and ribonuclease P/MRP complexes, depending on the context. The YTHDF paralogs (YTHDF1, YTHDF2 and YTHDF3) share m6A-containing mRNAs targets and act redundantly to mediate mRNA degradation and cellular differentiation. M6A-containing mRNAs containing a binding site for RIDA/HRSP12 (5'-GGUUC-3') are preferentially degraded by endoribonucleolytic cleavage: cooperative binding of RIDA/HRSP12 and YTHDF2 to transcripts leads to recruitment of the ribonuclease P/MRP complex. Other m6A-containing mRNAs undergo deadenylation via direct interaction between YTHDF2 and CNOT1, leading to recruitment of the CCR4-NOT and subsequent deadenylation of m6A-containing mRNAs. Required maternally to regulate oocyte maturation: probably acts by binding to m6A-containing mRNAs, thereby regulating maternal transcript dosage during oocyte maturation, which is essential for the competence of oocytes to sustain early zygotic development. Also required during spermatogenesis: regulates spermagonial adhesion by promoting degradation of m6A-containing transcripts coding for matrix metallopeptidases. Also involved in hematopoietic stem cells specification by binding to m6A-containing mRNAs, leading to promote their degradation. Also acts as a regulator of neural development by promoting m6A-dependent degradation of neural development-related mRNA targets. Inhibits neural specification of induced pluripotent stem cells by binding to methylated neural-specific mRNAs and promoting their degradation, thereby restraining neural differentiation. Regulates circadian regulation of hepatic lipid metabolism: acts by promoting m6A-dependent degradation of PPARA transcripts. Regulates the innate immune response to infection by inhibiting the type I interferon response: acts by binding to m6A-containing IFNB transcripts and promoting their degradation. May also act as a promoter of cap-independent mRNA translation following heat shock stress: upon stress, relocalizes to the nucleus and specifically binds mRNAs with some m6A methylation mark at their 5'-UTR, protecting demethylation of mRNAs by FTO, thereby promoting cap-independent mRNA translation. Regulates mitotic entry by promoting the phase-specific m6A-dependent degradation of WEE1 transcripts. Promotes formation of phase-separated membraneless compartments, such as P-bodies or stress granules, by undergoing liquid-liquid phase separation upon binding to mRNAs containing multiple m6A-modified residues: polymethylated mRNAs act as a multivalent scaffold for the binding of YTHDF proteins, juxtaposing their disordered regions and thereby leading to phase separation. The resulting mRNA-YTHDF complexes then partition into different endogenous phase-separated membraneless compartments, such as P-bodies, stress granules or neuronal RNA granules. May also recognize and bind RNAs modified by C5-methylcytosine (m5C) and act as a regulator of rRNA processing. The protein is YTH domain-containing family protein 2 of Bos taurus (Bovine).